We begin with the raw amino-acid sequence, 550 residues long: DNA-directed RNA polymerase subunit alpha (550 aa).

Positions 1-333 are alpha N-terminal domain (alpha-NTD); it reads MTIYPNLKKI…QENNLFRSEK (333 aa). An insert region spans residues 185–258; that stretch reads TTLKKRNILL…TSLGHDTVSN (74 aa). Residues 378–550 are alpha C-terminal domain (alpha-CTD); the sequence is FLNQSLGQNK…SLTFEYARKF (173 aa).

Belongs to the RNA polymerase alpha chain family. In terms of assembly, in plastids the minimal PEP RNA polymerase catalytic core is composed of four subunits: alpha, beta, beta', and beta''. When a (nuclear-encoded) sigma factor is associated with the core the holoenzyme is formed, which can initiate transcription.

The protein resides in the plastid. It localises to the chloroplast. The catalysed reaction is RNA(n) + a ribonucleoside 5'-triphosphate = RNA(n+1) + diphosphate. Its function is as follows. DNA-dependent RNA polymerase catalyzes the transcription of DNA into RNA using the four ribonucleoside triphosphates as substrates. This chain is DNA-directed RNA polymerase subunit alpha (rpoA), found in Chlamydomonas reinhardtii (Chlamydomonas smithii).